Here is a 154-residue protein sequence, read N- to C-terminus: 6,7-dimethyl-8-ribityllumazine synthase (154 aa).

Residues F22, 56–58, and 80–82 contribute to the 5-amino-6-(D-ribitylamino)uracil site; these read AFE and AVI. A (2S)-2-hydroxy-3-oxobutyl phosphate-binding site is contributed by 85-86; the sequence is AT. H88 functions as the Proton donor in the catalytic mechanism. A 5-amino-6-(D-ribitylamino)uracil-binding site is contributed by F113. Residue R127 participates in (2S)-2-hydroxy-3-oxobutyl phosphate binding.

Belongs to the DMRL synthase family.

The enzyme catalyses (2S)-2-hydroxy-3-oxobutyl phosphate + 5-amino-6-(D-ribitylamino)uracil = 6,7-dimethyl-8-(1-D-ribityl)lumazine + phosphate + 2 H2O + H(+). Its pathway is cofactor biosynthesis; riboflavin biosynthesis; riboflavin from 2-hydroxy-3-oxobutyl phosphate and 5-amino-6-(D-ribitylamino)uracil: step 1/2. In terms of biological role, catalyzes the formation of 6,7-dimethyl-8-ribityllumazine by condensation of 5-amino-6-(D-ribitylamino)uracil with 3,4-dihydroxy-2-butanone 4-phosphate. This is the penultimate step in the biosynthesis of riboflavin. The polypeptide is 6,7-dimethyl-8-ribityllumazine synthase (Syntrophobacter fumaroxidans (strain DSM 10017 / MPOB)).